Reading from the N-terminus, the 338-residue chain is DNA-directed RNA polymerase subunit alpha (338 aa).

The interval 1–234 is alpha N-terminal domain (alpha-NTD); it reads MIHKNWQELI…DQLSIFVNFD (234 aa). Residues 250–338 are alpha C-terminal domain (alpha-CTD); the sequence is FNPLLLKKVD…ELAKKYEDNF (89 aa).

Belongs to the RNA polymerase alpha chain family. In terms of assembly, homodimer. The RNAP catalytic core consists of 2 alpha, 1 beta, 1 beta' and 1 omega subunit. When a sigma factor is associated with the core the holoenzyme is formed, which can initiate transcription.

The catalysed reaction is RNA(n) + a ribonucleoside 5'-triphosphate = RNA(n+1) + diphosphate. Its function is as follows. DNA-dependent RNA polymerase catalyzes the transcription of DNA into RNA using the four ribonucleoside triphosphates as substrates. The sequence is that of DNA-directed RNA polymerase subunit alpha from Jannaschia sp. (strain CCS1).